Consider the following 299-residue polypeptide: F-actin-capping protein subunit alpha-3 (299 aa).

The residue at position 290 (Ser290) is a Phosphoserine.

This sequence belongs to the F-actin-capping protein alpha subunit family. As to quaternary structure, component of the F-actin capping complex, composed of a heterodimer of an alpha and a beta subunit. Component of the WASH complex, composed of F-actin-capping protein subunit alpha (CAPZA1, CAPZA2 or CAPZA3), F-actin-capping protein subunit beta (CAPZB), WASHC1, WASHC2, WASHC3, WASHC4 and WASHC5.

Its function is as follows. F-actin-capping proteins bind in a Ca(2+)-independent manner to the fast growing ends of actin filaments (barbed end) thereby blocking the exchange of subunits at these ends. Unlike other capping proteins (such as gelsolin and severin), these proteins do not sever actin filaments. May play a role in the morphogenesis of spermatid. The sequence is that of F-actin-capping protein subunit alpha-3 (CAPZA3) from Macaca fascicularis (Crab-eating macaque).